Here is a 367-residue protein sequence, read N- to C-terminus: Peptide chain release factor 1 (367 aa).

Position 243 is an N5-methylglutamine (Q243).

It belongs to the prokaryotic/mitochondrial release factor family. In terms of processing, methylated by PrmC. Methylation increases the termination efficiency of RF1.

It is found in the cytoplasm. Its function is as follows. Peptide chain release factor 1 directs the termination of translation in response to the peptide chain termination codons UAG and UAA. This chain is Peptide chain release factor 1, found in Acidovorax sp. (strain JS42).